The sequence spans 124 residues: Fluoride-specific ion channel FluC 1 (124 aa).

Transmembrane regions (helical) follow at residues 1-21 (MNWL…YVTD), 30-50 (AVFP…LGLL), 56-76 (AGVA…GALT), and 102-122 (IASV…AQAL). Na(+) contacts are provided by G73 and T76.

The protein belongs to the fluoride channel Fluc/FEX (TC 1.A.43) family.

It is found in the cell membrane. It catalyses the reaction fluoride(in) = fluoride(out). With respect to regulation, na(+) is not transported, but it plays an essential structural role and its presence is essential for fluoride channel function. Its function is as follows. Fluoride-specific ion channel. Important for reducing fluoride concentration in the cell, thus reducing its toxicity. The protein is Fluoride-specific ion channel FluC 1 of Streptomyces avermitilis (strain ATCC 31267 / DSM 46492 / JCM 5070 / NBRC 14893 / NCIMB 12804 / NRRL 8165 / MA-4680).